Reading from the N-terminus, the 190-residue chain is Putative histone H1.6 (190 aa).

The disordered stretch occupies residues 1 to 29 (MSDVAVAETPAVKTPTKAPKANATKVPKV). An N-acetylserine modification is found at Ser-2. A compositionally biased stretch (low complexity) spans 9–29 (TPAVKTPTKAPKANATKVPKV). Residues 34 to 110 (AHPPFINMVT…GATGRFRVAE (77 aa)) form the H15 domain. The interval 141–190 (KKTGDKVKKAKSPKKIAKPAAKKATKSPSKKVAPKKAAAKPAKKTAALKA) is disordered. Residues 148–183 (KKAKSPKKIAKPAAKKATKSPSKKVAPKKAAAKPAK) show a composition bias toward basic residues.

Belongs to the histone H1/H5 family.

The protein resides in the nucleus. Its subcellular location is the chromosome. Functionally, histones H1 are necessary for the condensation of nucleosome chains into higher-order structures. In Caenorhabditis elegans, this protein is Putative histone H1.6 (hil-6).